Consider the following 246-residue polypeptide: Chlorophyll a-b binding protein 6A, chloroplastic (246 aa).

The transit peptide at 1–45 (MASNTLMSCGIPAVCPSFLSSTKSKFAAAMPVYVGATNFMSRFSM) directs the protein to the chloroplast. Trp49 lines the chlorophyll b pocket. Residues Phe69, Glu88, and His91 each contribute to the chlorophyll a site. Chlorophyll b is bound at residue Arg93. The chain crosses the membrane as a helical span at residues 94–114 (WAMLAVPGIIVPEALGLGNWV). Position 130 (Leu130) interacts with chlorophyll a. Residues 133–153 (PVPWGTLPTILAIEFLAIAFV) form a helical membrane-spanning segment. Val134, Glu154, and Arg157 together coordinate chlorophyll b. Chlorophyll a is bound by residues Lys191, Glu192, Asn195, Arg197, Gln209, and His225.

It belongs to the light-harvesting chlorophyll a/b-binding (LHC) protein family. The LHC complex consists of chlorophyll a-b binding proteins. Binds at least 14 chlorophylls (8 Chl-a and 6 Chl-b) and carotenoids such as lutein and neoxanthin. is required as a cofactor. Post-translationally, photoregulated by reversible phosphorylation of its threonine residues.

Its subcellular location is the plastid. The protein resides in the chloroplast thylakoid membrane. In terms of biological role, the light-harvesting complex (LHC) functions as a light receptor, it captures and delivers excitation energy to photosystems with which it is closely associated. This Solanum lycopersicum (Tomato) protein is Chlorophyll a-b binding protein 6A, chloroplastic (CAB6A).